A 98-amino-acid chain; its full sequence is MSVSIKPLEDRIVVRPLEAEQTTASGLVIPDTAKEKPQEGQVVAVGPGRVAENGNRVPVDVAEGDVVLYSKYGGTEVKVGGEEYLVLSARDVLAVVTK.

This sequence belongs to the GroES chaperonin family. Heptamer of 7 subunits arranged in a ring. Interacts with the chaperonin GroEL.

The protein localises to the cytoplasm. Together with the chaperonin GroEL, plays an essential role in assisting protein folding. The GroEL-GroES system forms a nano-cage that allows encapsulation of the non-native substrate proteins and provides a physical environment optimized to promote and accelerate protein folding. GroES binds to the apical surface of the GroEL ring, thereby capping the opening of the GroEL channel. In Micrococcus luteus (strain ATCC 4698 / DSM 20030 / JCM 1464 / CCM 169 / CCUG 5858 / IAM 1056 / NBRC 3333 / NCIMB 9278 / NCTC 2665 / VKM Ac-2230) (Micrococcus lysodeikticus), this protein is Co-chaperonin GroES.